The following is a 194-amino-acid chain: GTP cyclohydrolase-2 (194 aa).

Residue 50-54 participates in GTP binding; that stretch reads RIHSE. 3 residues coordinate Zn(2+): Cys55, Cys66, and Cys68. Residues 94-96 and Thr116 each bind GTP; that span reads EGR. Asp128 acts as the Proton acceptor in catalysis. Arg130 serves as the catalytic Nucleophile. Residues Thr151 and Lys156 each coordinate GTP.

It belongs to the GTP cyclohydrolase II family. Zn(2+) is required as a cofactor.

The catalysed reaction is GTP + 4 H2O = 2,5-diamino-6-hydroxy-4-(5-phosphoribosylamino)-pyrimidine + formate + 2 phosphate + 3 H(+). Its pathway is cofactor biosynthesis; riboflavin biosynthesis; 5-amino-6-(D-ribitylamino)uracil from GTP: step 1/4. Catalyzes the conversion of GTP to 2,5-diamino-6-ribosylamino-4(3H)-pyrimidinone 5'-phosphate (DARP), formate and pyrophosphate. The protein is GTP cyclohydrolase-2 of Helicobacter hepaticus (strain ATCC 51449 / 3B1).